Here is a 137-residue protein sequence, read N- to C-terminus: Phospholipase A2 group V (137 aa).

The N-terminal stretch at 1-20 is a signal peptide; the sequence is MKGLLTLAWFLACSVPAVPG. 6 disulfides stabilise this stretch: Cys46-Cys137, Cys48-Cys64, Cys63-Cys117, Cys70-Cys110, Cys79-Cys103, and Cys97-Cys108. Residues Tyr47, Gly49, and Gly51 each contribute to the Ca(2+) site. His67 is a catalytic residue. Asp68 serves as a coordination point for Ca(2+). Asp111 is an active-site residue.

This sequence belongs to the phospholipase A2 family. Requires Ca(2+) as cofactor. Post-translationally, this enzyme lacks one of the seven disulfide bonds found in similar PA2 proteins. In terms of tissue distribution, expressed in peritoneal macrophages (at protein level). Expressed in heart, skeletal muscle and white adipose tissue.

Its subcellular location is the secreted. The protein localises to the cell membrane. It localises to the cytoplasmic vesicle. It is found in the phagosome. The protein resides in the recycling endosome. Its subcellular location is the golgi apparatus. The protein localises to the cis-Golgi network. It localises to the trans-Golgi network. The catalysed reaction is a 1,2-diacyl-sn-glycero-3-phosphocholine + H2O = a 1-acyl-sn-glycero-3-phosphocholine + a fatty acid + H(+). It catalyses the reaction 1-hexadecanoyl-2-(9Z-octadecenoyl)-sn-glycero-3-phosphocholine + H2O = 1-hexadecanoyl-sn-glycero-3-phosphocholine + (9Z)-octadecenoate + H(+). The enzyme catalyses 1-hexadecanoyl-2-(5Z,8Z,11Z,14Z-eicosatetraenoyl)-sn-glycero-3-phosphocholine + H2O = 1-hexadecanoyl-sn-glycero-3-phosphocholine + (5Z,8Z,11Z,14Z)-eicosatetraenoate + H(+). It carries out the reaction 1-hexadecanoyl-2-(9Z,12Z-octadecadienoyl)-sn-glycero-3-phosphoethanolamine + H2O = 1-hexadecanoyl-sn-glycero-3-phosphoethanolamine + (9Z,12Z)-octadecadienoate + H(+). The catalysed reaction is 1-hexadecanoyl-2-(5Z,8Z,11Z,14Z-eicosatetraenoyl)-sn-glycero-3-phosphoethanolamine + H2O = 1-hexadecanoyl-sn-glycero-3-phosphoethanolamine + (5Z,8Z,11Z,14Z)-eicosatetraenoate + H(+). It catalyses the reaction 1-octadecanoyl-2-(5Z,8Z,11Z,14Z-eicosatetraenoyl)-sn-glycero-3-phospho-(1D-myo-inositol) + H2O = 1-octadecanoyl-sn-glycero-3-phospho-(1D-myo-inositol) + (5Z,8Z,11Z,14Z)-eicosatetraenoate + H(+). The enzyme catalyses 1-hexadecanoyl-2-(9Z-octadecenoyl)-sn-glycero-3-phosphoglycerol + H2O = 1-hexadecanoyl-sn-glycero-3-phosphoglycerol + (9Z)-octadecenoate + H(+). It carries out the reaction N-hexadecanoyl-1,2-di-(9Z-octadecenoyl)-sn-glycero-3-phosphoethanolamine + H2O = N-hexadecanoyl-1-(9Z-octadecenoyl)-sn-glycero-3-phosphoethanolamine + (9Z)-octadecenoate + H(+). The catalysed reaction is 1'-[1,2-di-(9Z-octadecenoyl)-sn-glycero-3-phospho]-3'-[1-(9Z-octadecenoyl)-sn-glycero-3-phospho]-glycerol + H2O = 1',3'-bis-[1-(9Z-octadecenoyl)-sn-glycero-3-phospho]-glycerol + (9Z)-octadecenoate + H(+). It catalyses the reaction 1',3'-bis[1,2-di-(9Z-octadecenoyl)-sn-glycero-3-phospho]-glycerol + H2O = 1'-[1,2-di-(9Z-octadecenoyl)-sn-glycero-3-phospho]-3'-[1-(9Z-octadecenoyl)-sn-glycero-3-phospho]-glycerol + (9Z)-octadecenoate + H(+). The protein operates within lipid metabolism; phospholipid metabolism. It functions in the pathway lipid metabolism; leukotriene B4 biosynthesis. It participates in lipid metabolism; leukotriene C4 biosynthesis. Secretory calcium-dependent phospholipase A2 that primarily targets extracellular phospholipids. Hydrolyzes the ester bond of the fatty acyl group attached at sn-2 position of phospholipids (phospholipase A2 activity), preferentially releasing fatty acyl groups with a low degree of unsaturation such as oleoyl (C18:1) and linoleoyl (C18:2) groups. Hydrolyzes low-density lipoprotein (LDL) phospholipids releasing unsaturated fatty acids that drive macrophage polarization toward an M2 phenotype. May act in an autocrine and paracrine manner. Contributes to lipid remodeling of cellular membranes at different subcellular locations and generation of lipid mediators involved in pathogen clearance. Cleaves sn-2 fatty acyl chains of cardiolipin, a major component of the inner membrane of mitochondria and bacterial membranes. Promotes phagocytosis of bacteria in macrophages through production of lysophosphatidylethanolamines. Displays bactericidal activity against Gram-positive bacteria by directly hydrolyzing the phospholipids of the bacterial membrane. Promotes phagocytosis and killing of ingested fungi likely through controlling phagosome-lysosome fusion and phagosome maturation. Plays a role in biosynthesis of cysteinyl leukotrienes (CysLTs) in myeloid cells. In eosinophils, triggers perinuclear arachidonate release and LTC4 synthesis in a PLA2G4A-independent way. In neutrophils, amplifies CysLTs biosynthesis initiated by PLA2G4A. Promotes immune complex clearance in macrophages via stimulating synthesis of CysLTs, which act through CYSLTR1 to trigger phagocytosis. May regulate antigen processing in antigen-presenting cells. In pulmonary macrophages regulates IL33 production required for activation of group 2 innate lymphoid cells. May play a role in the biosynthesis of N-acyl ethanolamines that regulate energy metabolism. Hydrolyzes N-acyl phosphatidylethanolamines to N-acyl lysophosphatidylethanolamines, which are further cleaved by a lysophospholipase D to release N-acyl ethanolamines. The chain is Phospholipase A2 group V (Pla2g5) from Mus musculus (Mouse).